Reading from the N-terminus, the 237-residue chain is Class B acid phosphatase (237 aa).

A signal peptide spans 1-25 (MRKLTLAFAAASLLFTLNSAVVARA). Catalysis depends on aspartate 69, which acts as the Nucleophile. Residues aspartate 69 and aspartate 71 each coordinate Mg(2+). The active-site Proton donor is aspartate 71. Substrate is bound by residues 137-138 (TG) and lysine 177. Aspartate 192 is a binding site for Mg(2+).

The protein belongs to the class B bacterial acid phosphatase family. As to quaternary structure, homotetramer. Requires Mg(2+) as cofactor.

The protein resides in the periplasm. The enzyme catalyses a phosphate monoester + H2O = an alcohol + phosphate. Its function is as follows. Dephosphorylates several organic phosphate monoesters. Also has a phosphotransferase activity catalyzing the transfer of low-energy phosphate groups from organic phosphate monoesters to free hydroxyl groups of various organic compounds. The sequence is that of Class B acid phosphatase from Klebsiella pneumoniae (strain 342).